We begin with the raw amino-acid sequence, 390 residues long: Succinyl-diaminopimelate desuccinylase (390 aa).

Residue H75 participates in Zn(2+) binding. Residue D77 is part of the active site. Zn(2+) is bound at residue D108. The Proton acceptor role is filled by E141. The Zn(2+) site is built by E142, E170, and H359.

It belongs to the peptidase M20A family. DapE subfamily. Homodimer. Zn(2+) serves as cofactor. The cofactor is Co(2+).

It carries out the reaction N-succinyl-(2S,6S)-2,6-diaminopimelate + H2O = (2S,6S)-2,6-diaminopimelate + succinate. Its pathway is amino-acid biosynthesis; L-lysine biosynthesis via DAP pathway; LL-2,6-diaminopimelate from (S)-tetrahydrodipicolinate (succinylase route): step 3/3. In terms of biological role, catalyzes the hydrolysis of N-succinyl-L,L-diaminopimelic acid (SDAP), forming succinate and LL-2,6-diaminopimelate (DAP), an intermediate involved in the bacterial biosynthesis of lysine and meso-diaminopimelic acid, an essential component of bacterial cell walls. The sequence is that of Succinyl-diaminopimelate desuccinylase from Maricaulis maris (strain MCS10) (Caulobacter maris).